The chain runs to 180 residues: Large ribosomal subunit protein uL5 (180 aa).

It belongs to the universal ribosomal protein uL5 family. In terms of assembly, part of the 50S ribosomal subunit; part of the 5S rRNA/L5/L18/L25 subcomplex. Contacts the 5S rRNA and the P site tRNA. Forms a bridge to the 30S subunit in the 70S ribosome.

Its function is as follows. This is one of the proteins that bind and probably mediate the attachment of the 5S RNA into the large ribosomal subunit, where it forms part of the central protuberance. In the 70S ribosome it contacts protein S13 of the 30S subunit (bridge B1b), connecting the 2 subunits; this bridge is implicated in subunit movement. Contacts the P site tRNA; the 5S rRNA and some of its associated proteins might help stabilize positioning of ribosome-bound tRNAs. The chain is Large ribosomal subunit protein uL5 from Anaeromyxobacter dehalogenans (strain 2CP-1 / ATCC BAA-258).